Reading from the N-terminus, the 258-residue chain is Thiazole synthase (258 aa).

Catalysis depends on lysine 100, which acts as the Schiff-base intermediate with DXP. Residues glycine 161, 187-188 (AG), and 209-210 (NS) each bind 1-deoxy-D-xylulose 5-phosphate.

This sequence belongs to the ThiG family. As to quaternary structure, homotetramer. Forms heterodimers with either ThiH or ThiS.

It is found in the plastid. The protein resides in the chloroplast. The catalysed reaction is [ThiS sulfur-carrier protein]-C-terminal-Gly-aminoethanethioate + 2-iminoacetate + 1-deoxy-D-xylulose 5-phosphate = [ThiS sulfur-carrier protein]-C-terminal Gly-Gly + 2-[(2R,5Z)-2-carboxy-4-methylthiazol-5(2H)-ylidene]ethyl phosphate + 2 H2O + H(+). The protein operates within cofactor biosynthesis; thiamine diphosphate biosynthesis. Catalyzes the rearrangement of 1-deoxy-D-xylulose 5-phosphate (DXP) to produce the thiazole phosphate moiety of thiamine. Sulfur is provided by the thiocarboxylate moiety of the carrier protein ThiS. In vitro, sulfur can be provided by H(2)S. This is Thiazole synthase from Cyanidioschyzon merolae (strain NIES-3377 / 10D) (Unicellular red alga).